We begin with the raw amino-acid sequence, 200 residues long: Nascent polypeptide-associated complex subunit alpha (200 aa).

The segment covering 1-19 has biased composition (basic and acidic residues); sequence MADPRIEELPDEETKKPTV. 2 disordered regions span residues 1 to 52 and 120 to 165; these read MADP…SRNE and QQLA…EDKD. Over residues 20–34 the composition is skewed to acidic residues; the sequence is EELDESSDEESDAEA. The NAC-A/B domain occupies 49–114; it reads SRNEKKARKA…AKIEDLNASA (66 aa). Residues 127-143 show a composition bias toward basic and acidic residues; it reads AEHDHAGHTHDHKHEAA. Positions 144-160 are enriched in acidic residues; the sequence is KEEEEEEDDGEEVDAEG. A UBA domain is found at 161–200; that stretch reads IEDKDIELVMTQANVSRKKAIKALKENDNDIVNSIMALSV.

Belongs to the NAC-alpha family. As to quaternary structure, part of the nascent polypeptide-associated complex (NAC), consisting of EGD2 and EGD1. NAC associates with ribosomes via EGD1.

The protein resides in the cytoplasm. It is found in the nucleus. Functionally, component of the nascent polypeptide-associated complex (NAC), a dynamic component of the ribosomal exit tunnel, protecting the emerging polypeptides from interaction with other cytoplasmic proteins to ensure appropriate nascent protein targeting. The NAC complex also promotes mitochondrial protein import by enhancing productive ribosome interactions with the outer mitochondrial membrane and blocks the inappropriate interaction of ribosomes translating non-secretory nascent polypeptides with translocation sites in the membrane of the endoplasmic reticulum. EGD2 may also be involved in transcription regulation. The sequence is that of Nascent polypeptide-associated complex subunit alpha (EGD2) from Chaetomium globosum (strain ATCC 6205 / CBS 148.51 / DSM 1962 / NBRC 6347 / NRRL 1970) (Soil fungus).